The sequence spans 395 residues: Acetate kinase (395 aa).

Asn-8 lines the Mg(2+) pocket. Position 15 (Lys-15) interacts with ATP. Residue Arg-94 coordinates substrate. The active-site Proton donor/acceptor is the Asp-151. Residues 210 to 214 (HLGNG), 284 to 286 (DMR), and 329 to 333 (GIGEN) contribute to the ATP site. Glu-382 is a binding site for Mg(2+).

Belongs to the acetokinase family. In terms of assembly, homodimer. It depends on Mg(2+) as a cofactor. The cofactor is Mn(2+).

It is found in the cytoplasm. It catalyses the reaction acetate + ATP = acetyl phosphate + ADP. It functions in the pathway metabolic intermediate biosynthesis; acetyl-CoA biosynthesis; acetyl-CoA from acetate: step 1/2. Functionally, catalyzes the formation of acetyl phosphate from acetate and ATP. Can also catalyze the reverse reaction. The sequence is that of Acetate kinase from Protochlamydia amoebophila (strain UWE25).